A 138-amino-acid chain; its full sequence is MASLPEPQKLARNFARCNDWEEKYLYIIELGERLDPLPDEWRNPDNLISGCQSQVWIVAQPDEQGVIVLHGDSDAAIVKGLIAVVFSLYQGLTAQEIVELDVRPFFESLALNQHLTPSRSQGLEAMLRAIRAHAAALL.

Cysteine 51 serves as the catalytic Cysteine persulfide intermediate.

The protein belongs to the SufE family. As to quaternary structure, homodimer. Interacts with SufS.

The protein localises to the cytoplasm. It participates in cofactor biosynthesis; iron-sulfur cluster biosynthesis. Its function is as follows. Participates in cysteine desulfuration mediated by SufS. Cysteine desulfuration mobilizes sulfur from L-cysteine to yield L-alanine and constitutes an essential step in sulfur metabolism for biosynthesis of a variety of sulfur-containing biomolecules. Functions as a sulfur acceptor for SufS, by mediating the direct transfer of the sulfur atom from the S-sulfanylcysteine of SufS, an intermediate product of cysteine desulfuration process. The protein is Cysteine desulfuration protein SufE of Pectobacterium carotovorum subsp. carotovorum (strain PC1).